We begin with the raw amino-acid sequence, 591 residues long: MEKRTNYCGELNETHIDQHVVLHGWVQKRRDLGGLIFIDLRDREGIVQVVFNPEFSKEALEIADSVRNEFVVTIKGKVHARGEKAINEKLATGKVEILAEEITILNTSKTPPFYIEDGVNVSDELRLKYRYLDLRRPEMNNIFKMRHTVTRTFRNKLDALGFFDIETPYLTKSTPEGARDYLVPSRVYPGNFYALPQSPQILKQLLMTAGFDKYYQIVRCFRDEDLRGDRQPEFTQIDLETSFLTKEKIQAITEDMLIDVVKEAKGITIEKPFPRMTYKEAMDRFGSDKPDIRFGLELQNVSEVVKDVDFKVFQSAIENGGEVKAINAKAAAANFSRKDLDALGIFVSNYGAKGLAWLKVEAGELKGPIAKFFPEEKALELKAALKAEDGDLLLFAADKADIVAASLGALRNKLGKDLNLINEDELAFLWVTDWPLFEYDEEAGRYVSAHHPFTLPKEEDIPLLETDSSKVMAEAYDIVLNGYEIGGGSLRIYKKEVQESMFRALGFTDESAKEQFGFLMDALEYGTPPHGGIALGLDRIVMILAGRNNLRDTIAFPKTGSAVDPLTNAPGEVSDAQLDELKLQITKKELN.

Glu176 contacts L-aspartate. Residues 200 to 203 (QILK) are aspartate. L-aspartate is bound at residue Arg222. ATP is bound by residues 222-224 (RDE) and Gln231. His450 lines the L-aspartate pocket. Position 484 (Glu484) interacts with ATP. Arg491 lines the L-aspartate pocket. Position 536 to 539 (536 to 539 (GLDR)) interacts with ATP.

This sequence belongs to the class-II aminoacyl-tRNA synthetase family. Type 1 subfamily. In terms of assembly, homodimer.

The protein localises to the cytoplasm. It carries out the reaction tRNA(Asp) + L-aspartate + ATP = L-aspartyl-tRNA(Asp) + AMP + diphosphate. Catalyzes the attachment of L-aspartate to tRNA(Asp) in a two-step reaction: L-aspartate is first activated by ATP to form Asp-AMP and then transferred to the acceptor end of tRNA(Asp). This chain is Aspartate--tRNA ligase, found in Listeria welshimeri serovar 6b (strain ATCC 35897 / DSM 20650 / CCUG 15529 / CIP 8149 / NCTC 11857 / SLCC 5334 / V8).